Here is a 327-residue protein sequence, read N- to C-terminus: Dipeptide transport ATP-binding protein DppD (327 aa).

The 251-residue stretch at 4-254 (LNVDKLSVHF…PRHPYTQALL (251 aa)) folds into the ABC transporter domain. Residue 40–47 (GESGSGKS) participates in ATP binding.

Belongs to the ABC transporter superfamily. The complex is composed of two ATP-binding proteins (DppD and DppF), two transmembrane proteins (DppB and DppC) and a solute-binding protein (DppA). MppA can replace DppA as binding protein for heme and ALA transport.

Its subcellular location is the cell inner membrane. The catalysed reaction is a dipeptide(out) + ATP + H2O = a dipeptide(in) + ADP + phosphate + H(+). Part of the ABC transporter DppABCDF involved in dipeptide transport. Responsible for energy coupling to the transport system. In terms of biological role, when a foreign outer membrane heme receptor is expressed in E.coli, DppABCDF can also transport heme and its precursor, 5-aminolevulinic acid (ALA), from the periplasm into the cytoplasm. This is Dipeptide transport ATP-binding protein DppD (dppD) from Escherichia coli (strain K12).